The chain runs to 63 residues: Large ribosomal subunit protein bL32 (63 aa).

The disordered stretch occupies residues 1 to 20; the sequence is MANPKAKMSKSRRDKRRAQF. Over residues 7–18 the composition is skewed to basic residues; the sequence is KMSKSRRDKRRA.

The protein belongs to the bacterial ribosomal protein bL32 family.

This Chlorobaculum parvum (strain DSM 263 / NCIMB 8327) (Chlorobium vibrioforme subsp. thiosulfatophilum) protein is Large ribosomal subunit protein bL32.